We begin with the raw amino-acid sequence, 446 residues long: Probable polyamine aminopropyl transferase (446 aa).

The tract at residues 1-117 (MVEPAIGRNH…KRIACVVSAV (117 aa)) is unknown. The segment at 64-94 (GRGAERWHRSPRQANGRFSNQRYSSTSPNSS) is disordered. The span at 75–94 (RQANGRFSNQRYSSTSPNSS) shows a compositional bias: polar residues. The PABS domain occupies 116 to 351 (AVIFVATSCV…ELFAKKPGSG (236 aa)). The interval 118 to 353 (IFVATSCVSP…FAKKPGSGSE (236 aa)) is spermidine synthase. Residues asparagine 147, glutamate 226, and 251-252 (DG) each bind S-methyl-5'-thioadenosine. Aspartate 269 (proton acceptor) is an active-site residue.

It belongs to the spermidine/spermine synthase family. As to quaternary structure, homodimer or homotetramer.

The protein resides in the cytoplasm. The catalysed reaction is S-adenosyl 3-(methylsulfanyl)propylamine + putrescine = S-methyl-5'-thioadenosine + spermidine + H(+). It functions in the pathway amine and polyamine biosynthesis; spermidine biosynthesis; spermidine from putrescine: step 1/1. In terms of biological role, catalyzes the irreversible transfer of a propylamine group from the amino donor S-adenosylmethioninamine (decarboxy-AdoMet) to putrescine (1,4-diaminobutane) to yield spermidine. In Bifidobacterium longum (strain NCC 2705), this protein is Probable polyamine aminopropyl transferase (speE).